A 400-amino-acid chain; its full sequence is Tyrosine--tRNA ligase 2 (400 aa).

A 'HIGH' region motif is present at residues 46–55 (PSAPDIHLGH). Residues 230–234 (KMSKS) carry the 'KMSKS' region motif. Lys-233 lines the ATP pocket. In terms of domain architecture, S4 RNA-binding spans 339–399 (NNLIEAIVKI…GKKKIVKLLV (61 aa)).

The protein belongs to the class-I aminoacyl-tRNA synthetase family. TyrS type 2 subfamily. In terms of assembly, homodimer.

It localises to the cytoplasm. It catalyses the reaction tRNA(Tyr) + L-tyrosine + ATP = L-tyrosyl-tRNA(Tyr) + AMP + diphosphate + H(+). Catalyzes the attachment of tyrosine to tRNA(Tyr) in a two-step reaction: tyrosine is first activated by ATP to form Tyr-AMP and then transferred to the acceptor end of tRNA(Tyr). This is Tyrosine--tRNA ligase 2 from Clostridium acetobutylicum (strain ATCC 824 / DSM 792 / JCM 1419 / IAM 19013 / LMG 5710 / NBRC 13948 / NRRL B-527 / VKM B-1787 / 2291 / W).